The primary structure comprises 514 residues: Thymus-specific serine protease (514 aa).

Positions 1–24 are cleaved as a signal peptide; sequence MAVWLAQWLGPLLLVSLWGLLAPA. N-linked (GlcNAc...) asparagine glycans are attached at residues Asn-70 and Asn-172. Catalysis depends on Ser-185, which acts as the Charge relay system. Asn-321 carries an N-linked (GlcNAc...) asparagine glycan. Residues Asp-447 and His-472 each act as charge relay system in the active site.

The protein belongs to the peptidase S28 family. In terms of tissue distribution, expressed predominantly in cortical thymic epithelial cells.

It is found in the cytoplasmic vesicle. Functionally, protease that may play a role in T-cell development. This chain is Thymus-specific serine protease (PRSS16), found in Homo sapiens (Human).